The primary structure comprises 211 residues: ATP-dependent Clp protease proteolytic subunit (211 aa).

S106 (nucleophile) is an active-site residue. H131 is an active-site residue.

It belongs to the peptidase S14 family. In terms of assembly, fourteen ClpP subunits assemble into 2 heptameric rings which stack back to back to give a disk-like structure with a central cavity, resembling the structure of eukaryotic proteasomes.

It localises to the cytoplasm. It carries out the reaction Hydrolysis of proteins to small peptides in the presence of ATP and magnesium. alpha-casein is the usual test substrate. In the absence of ATP, only oligopeptides shorter than five residues are hydrolyzed (such as succinyl-Leu-Tyr-|-NHMec, and Leu-Tyr-Leu-|-Tyr-Trp, in which cleavage of the -Tyr-|-Leu- and -Tyr-|-Trp bonds also occurs).. In terms of biological role, cleaves peptides in various proteins in a process that requires ATP hydrolysis. Has a chymotrypsin-like activity. Plays a major role in the degradation of misfolded proteins. The protein is ATP-dependent Clp protease proteolytic subunit of Rhodopseudomonas palustris (strain BisA53).